Reading from the N-terminus, the 64-residue chain is Large ribosomal subunit protein uL29 (64 aa).

This sequence belongs to the universal ribosomal protein uL29 family.

The polypeptide is Large ribosomal subunit protein uL29 (Coprothermobacter proteolyticus (strain ATCC 35245 / DSM 5265 / OCM 4 / BT)).